We begin with the raw amino-acid sequence, 93 residues long: MGRSLKKGPFVDAKLLLKIEKMNERNEKHMIKTWSRASTILPVMIGHTIAVHNGKQHVPIYITDQMVGHKLGEFVPTRTFRGHAGSDKKAARR.

It belongs to the universal ribosomal protein uS19 family.

Its function is as follows. Protein S19 forms a complex with S13 that binds strongly to the 16S ribosomal RNA. This is Small ribosomal subunit protein uS19 from Synechococcus sp. (strain JA-3-3Ab) (Cyanobacteria bacterium Yellowstone A-Prime).